The primary structure comprises 982 residues: MASKESKPSRTTWRDMEPPLRETWNQVLQELVKRQQQEEEEQQGLVSGKKKSWVSIDLLGTEGKDIKKVNIWEPCEKWFAQVVWGVLWVLQIVLWGCLMWEVRKGNQCQAEEVIALVSDPGGFQRVQHVETVPVTCVTKNFTQWGCQPEGAYPDPELEYRNISREILEEVYKQDWPWNTYHWPLWQMENMRQWMKENEKEYKERTNKTKEDIDDLVAGRIRGRFCVPYPYALLRCEEWCWYPESINQETGHAEKIKINCTKAKAVSCTEKMPLAAVQRVYWEKEDEESMKFLNIKACNISLRCQDEGKSPGGCVQGYPIPKGAEIIPEAMKYLRGKKSRYGGIKDKNGELKLPLSVRVWVRMANLSGWVNGTPPYWSARINGSTGINGTRWYGVGTLHHLGYNISSNPEGGICNFTGELWIGGDRFPYYYKPSWNCSQNWTGHPVWHVFRYLDMTEHMTSRCIQRPKRHNITVGNGTITGNCSVTNWDGCNCTRSGNHLYNSTSGGLLVIICRQNSTITGIMGTNTNWTTMWNIYQNCSRCNNSSLDRTGSGTLGTVNNLKCSLPHRNESNKWTCKSQRDSYIAGRDFWGKVKAKYSCESNLGGLDSMMHQQMLLQRYQVIRVRAYTYGVVEMPQSYMEERGENRRSRRNLQRKKRGIGLVIVLAIMAIIAAAGAGLGVANAVQQSYTRTAVQSLANATAAQQEVLEASYAMVQHIAKGIRILEARVARVEALVDMMVYQELDCWHYQHYCVTSTRSEVANYVNWTRFKDNCTWQQWEEEIEQHEGNLSLLLREAALQVHIAQRDARRIPDAWKAIQEAFNWSSWFSWLKYIPWIIMGIVGLMCFRILMCVISMCLQAYKQVKQIRYTQVTVVIEAPVELEEKQKRNGDGTNGCASLEHERRTSHRSFIQIWRATWWAWKTSPWRHNWRTMPYITLLPILVIWQWMEENGWNGENQHKKKKERVDCQDREQMPTLENDYVEL.

The first 106 residues, 1–106 (MASKESKPSR…CLMWEVRKGN (106 aa)), serve as a signal peptide directing secretion. Over 107–831 (QCQAEEVIAL…WSSWFSWLKY (725 aa)) the chain is Extracellular. N140, N161, N206, N258, N298, N364, N381, N387, N403, N414, N435, N439, N470, N475, N481, N491, N501, N515, N527, N537, N542, N543, and N568 each carry an N-linked (GlcNAc...) asparagine; by host glycan. Positions 657 to 677 (GIGLVIVLAIMAIIAAAGAGL) are fusion peptide. The stretch at 689-738 (RTAVQSLANATAAQQEVLEASYAMVQHIAKGIRILEARVARVEALVDMMV) forms a coiled coil. N697 carries N-linked (GlcNAc...) asparagine; by host glycosylation. The tract at residues 723-738 (LEARVARVEALVDMMV) is immunosuppression. N-linked (GlcNAc...) asparagine; by host glycosylation is found at N764, N771, N787, and N821. Residues 779–814 (EEIEQHEGNLSLLLREAALQVHIAQRDARRIPDAWK) are a coiled coil. A helical membrane pass occupies residues 832–852 (IPWIIMGIVGLMCFRILMCVI). Topologically, residues 853–982 (SMCLQAYKQV…PTLENDYVEL (130 aa)) are cytoplasmic. The S-palmitoyl cysteine; by host moiety is linked to residue C855.

As to quaternary structure, the mature envelope protein (Env) consists of a trimer of SU-TM heterodimers attached by noncovalent interactions or by a labile interchain disulfide bond. In terms of processing, specific enzymatic cleavages in vivo yield mature proteins. Envelope glycoproteins are synthesized as an inactive precursor that is N-glycosylated and processed likely by host cell furin or by a furin-like protease in the Golgi to yield the mature SU and TM proteins. The cleavage site between SU and TM requires the minimal sequence [KR]-X-[KR]-R. The transmembrane protein is palmitoylated.

The protein resides in the virion membrane. It localises to the host cell membrane. Its function is as follows. The surface protein (SU) attaches the virus to the host cell by binding to its receptor. This interaction triggers the refolding of the transmembrane protein (TM) and is thought to activate its fusogenic potential by unmasking its fusion peptide. Fusion occurs at the host cell plasma membrane. Functionally, the transmembrane protein (TM) acts as a class I viral fusion protein. Under the current model, the protein has at least 3 conformational states: pre-fusion native state, pre-hairpin intermediate state, and post-fusion hairpin state. During viral and target cell membrane fusion, the coiled coil regions (heptad repeats) assume a trimer-of-hairpins structure, positioning the fusion peptide in close proximity to the C-terminal region of the ectodomain. The formation of this structure appears to drive apposition and subsequent fusion of viral and target cell membranes. Membranes fusion leads to delivery of the nucleocapsid into the cytoplasm. The sequence is that of Envelope glycoprotein gp160 (env) from Maedi visna virus (strain 1514) (MVV).